We begin with the raw amino-acid sequence, 80 residues long: Acyl carrier protein (80 aa).

In terms of domain architecture, Carrier spans 4-79 (DATLEKVRSI…DAVKYIEDKQ (76 aa)). Serine 39 is modified (O-(pantetheine 4'-phosphoryl)serine).

It belongs to the acyl carrier protein (ACP) family. 4'-phosphopantetheine is transferred from CoA to a specific serine of apo-ACP by AcpS. This modification is essential for activity because fatty acids are bound in thioester linkage to the sulfhydryl of the prosthetic group.

It localises to the cytoplasm. Its pathway is lipid metabolism; fatty acid biosynthesis. In terms of biological role, carrier of the growing fatty acid chain in fatty acid biosynthesis. This is Acyl carrier protein from Prochlorococcus marinus (strain MIT 9211).